A 675-amino-acid chain; its full sequence is MANSQRKILVTSALPYANGPIHLGHMLEYIQTDIWSRFQKLRGHECHYICADDAHGTPIMLKAQQLGMAPEEMIAQVNVEHQQDFADFNVAFDNYHSTHSDENRALASEIYLKLRDGGYIKSKTISQLFDPEKSMFLPDRFVKGTCPKCKSEDQYGDNCDACGATYSPTELINPRSAVSGATPVMKETEHFFFDLPAFEGMLKAWTRSGALQSEMANKLDEWFEQGLQQWDITRDAPYFGFEIPDAPGKYFYVWLDAPIGYMGSFKNFCDKRGDINFDEFWAKDSSAEVYHFIGKDIVYFHSLFWPAMLHGAGFRQPSSVYAHGYVTVNGAKMSKSKGTFIKARTYLDHLDPEYLRYYYAAKLSARIDDLDLNLEDFAQRVNSDLVGKLVNLASRTAGFITKRFDGKLAAVADKSLIDSFLAKQDVIAELYEAREYGKAMREIMALADVANGFVADAAPWQLVKQDDKQEEAHQVCSNALNLFRILVTYLKPVLPRLAKDVEDFFRMELTWDGLDSDLSGHEIAPFKPMMQRVELDKVAAMVEASKENLQATAEPVKTGPLADDPISETISYEDFAKIDLRVALIQKAEAVPEADKLLKLQLDIGGEVRQVFAGIKSAYNPEDLEGKLTVMVANLAPRKMRFGMSEGMVLAAGPGGKDLFVLEPHAGAKPGMRVK.

Residues 15-25 (PYANGPIHLGH) carry the 'HIGH' region motif. Residues cysteine 146, cysteine 149, cysteine 159, and cysteine 162 each coordinate Zn(2+). A 'KMSKS' region motif is present at residues 332 to 336 (KMSKS). Lysine 335 lines the ATP pocket. The tRNA-binding domain maps to 574-675 (DFAKIDLRVA…AGAKPGMRVK (102 aa)).

It belongs to the class-I aminoacyl-tRNA synthetase family. MetG type 1 subfamily. In terms of assembly, homodimer. Zn(2+) serves as cofactor.

It localises to the cytoplasm. The catalysed reaction is tRNA(Met) + L-methionine + ATP = L-methionyl-tRNA(Met) + AMP + diphosphate. Its function is as follows. Is required not only for elongation of protein synthesis but also for the initiation of all mRNA translation through initiator tRNA(fMet) aminoacylation. The sequence is that of Methionine--tRNA ligase from Shewanella amazonensis (strain ATCC BAA-1098 / SB2B).